Reading from the N-terminus, the 926-residue chain is Taz1-interacting factor 1 (926 aa).

2 coiled-coil regions span residues 461 to 496 and 548 to 671; these read REAV…SHQN and SFTD…LKQK. S548 bears the Phosphoserine mark. T550 bears the Phosphothreonine mark. Phosphoserine is present on S552.

This sequence belongs to the ATG11 family. In terms of assembly, homodimer and potential homooligomers. Interacts with taz1.

The protein resides in the preautophagosomal structure membrane. The protein localises to the vacuole membrane. Involved in cytoplasm to vacuole transport (Cvt), pexophagy, mitophagy and nucleophagy. Recruits mitochondria for their selective degradation via autophagy (mitophagy) during starvation. Works as scaffold proteins that recruit ATG proteins to the preautophagosome (PAS), the site of vesicle/autophagosome formation. Required for atg9 anterograde transport from the mitochondria to the PAS. Required for nitrogen starvation-induced sexual development and for entering the dormant G0 state. The sequence is that of Taz1-interacting factor 1 (taf1) from Schizosaccharomyces pombe (strain 972 / ATCC 24843) (Fission yeast).